Reading from the N-terminus, the 81-residue chain is Sulfur carrier protein TusA (81 aa).

The active-site Cysteine persulfide intermediate is Cys-19.

The protein belongs to the sulfur carrier protein TusA family.

The protein resides in the cytoplasm. In terms of biological role, sulfur carrier protein which probably makes part of a sulfur-relay system. This is Sulfur carrier protein TusA from Vibrio vulnificus (strain CMCP6).